An 818-amino-acid chain; its full sequence is LPS-assembly protein LptD (818 aa).

The signal sequence occupies residues 1 to 33 (MVNETMKHQFKFNPLATAIFTLLCSGSIQSSYA).

The protein belongs to the LptD family. As to quaternary structure, component of the lipopolysaccharide transport and assembly complex. Interacts with LptE and LptA.

It localises to the cell outer membrane. In terms of biological role, together with LptE, is involved in the assembly of lipopolysaccharide (LPS) at the surface of the outer membrane. In Acinetobacter baumannii (strain ATCC 19606 / DSM 30007 / JCM 6841 / CCUG 19606 / CIP 70.34 / NBRC 109757 / NCIMB 12457 / NCTC 12156 / 81), this protein is LPS-assembly protein LptD.